The primary structure comprises 86 residues: Small ribosomal subunit protein bS20 (86 aa).

The protein belongs to the bacterial ribosomal protein bS20 family.

Functionally, binds directly to 16S ribosomal RNA. This chain is Small ribosomal subunit protein bS20, found in Novosphingobium aromaticivorans (strain ATCC 700278 / DSM 12444 / CCUG 56034 / CIP 105152 / NBRC 16084 / F199).